A 367-amino-acid chain; its full sequence is MTVMKFDLIKKEGKARRGKITFPRGDIQTPAFMPVGTYGAVKSLSPVELKEMGAEIILGNTFHLWLRPGTEIIKKHGSLHGFNGWDKPILTDSGGFQVFSLGKMRKLTEEGVTFKSPINSSKVFLSPEISMQVQRDLGSDIVMCFDECTPYPATEKEAKESMELSMRWAKRSKEAHGDNPSALFGIIQGGMYEHLRDESLAKLKEIDFDGFAIGGLSVGEPKEDMIRILDHTAHQMPEDKPRYLMGVGTPKDLVEAVYRGVDMFDCVMPSRNARNGHIFTSEGVIKIRNSKYKDDTSLLDPNCDCYTCKNFTKSYLHHLDKTKEILGSRLNTIHNLTFYQNLMKSIRKALDEGRFSEFRKEFLASYK.

The active-site Proton acceptor is the aspartate 92. Substrate contacts are provided by residues 92–96, aspartate 146, glutamine 188, and glycine 215; that span reads DSGGF. Residues 246-252 form an RNA binding region; that stretch reads GVGTPKD. Aspartate 265 serves as the catalytic Nucleophile. Positions 303, 305, 308, and 334 each coordinate Zn(2+).

This sequence belongs to the queuine tRNA-ribosyltransferase family. In terms of assembly, homodimer. Within each dimer, one monomer is responsible for RNA recognition and catalysis, while the other monomer binds to the replacement base PreQ1. Zn(2+) is required as a cofactor.

The catalysed reaction is 7-aminomethyl-7-carbaguanine + guanosine(34) in tRNA = 7-aminomethyl-7-carbaguanosine(34) in tRNA + guanine. The protein operates within tRNA modification; tRNA-queuosine biosynthesis. Functionally, catalyzes the base-exchange of a guanine (G) residue with the queuine precursor 7-aminomethyl-7-deazaguanine (PreQ1) at position 34 (anticodon wobble position) in tRNAs with GU(N) anticodons (tRNA-Asp, -Asn, -His and -Tyr). Catalysis occurs through a double-displacement mechanism. The nucleophile active site attacks the C1' of nucleotide 34 to detach the guanine base from the RNA, forming a covalent enzyme-RNA intermediate. The proton acceptor active site deprotonates the incoming PreQ1, allowing a nucleophilic attack on the C1' of the ribose to form the product. After dissociation, two additional enzymatic reactions on the tRNA convert PreQ1 to queuine (Q), resulting in the hypermodified nucleoside queuosine (7-(((4,5-cis-dihydroxy-2-cyclopenten-1-yl)amino)methyl)-7-deazaguanosine). The protein is Queuine tRNA-ribosyltransferase of Francisella tularensis subsp. mediasiatica (strain FSC147).